A 385-amino-acid chain; its full sequence is 8-amino-7-oxononanoate synthase (385 aa).

Arginine 21 provides a ligand contact to substrate. A pyridoxal 5'-phosphate-binding site is contributed by 108–109 (GF). Histidine 133 contributes to the substrate binding site. Pyridoxal 5'-phosphate is bound by residues serine 179, histidine 207, and threonine 233. Lysine 236 carries the N6-(pyridoxal phosphate)lysine modification. Position 352 (threonine 352) interacts with substrate.

It belongs to the class-II pyridoxal-phosphate-dependent aminotransferase family. BioF subfamily. As to quaternary structure, homodimer. Requires pyridoxal 5'-phosphate as cofactor.

The catalysed reaction is 6-carboxyhexanoyl-[ACP] + L-alanine + H(+) = (8S)-8-amino-7-oxononanoate + holo-[ACP] + CO2. Its pathway is cofactor biosynthesis; biotin biosynthesis. Functionally, catalyzes the decarboxylative condensation of pimeloyl-[acyl-carrier protein] and L-alanine to produce 8-amino-7-oxononanoate (AON), [acyl-carrier protein], and carbon dioxide. The sequence is that of 8-amino-7-oxononanoate synthase from Pseudescherichia vulneris (Escherichia vulneris).